Reading from the N-terminus, the 349-residue chain is Protein-glutamate methylesterase/protein-glutamine glutaminase (349 aa).

Residues 5–122 enclose the Response regulatory domain; the sequence is RVLSVDDSAL…REGMLAYSEM (118 aa). A 4-aspartylphosphate modification is found at aspartate 56. The region spanning 152–344 is the CheB-type methylesterase domain; the sequence is LLSSEKLIAI…QQMLAKISAG (193 aa). Catalysis depends on residues serine 164, histidine 190, and aspartate 286.

The protein belongs to the CheB family. Phosphorylated by CheA. Phosphorylation of the N-terminal regulatory domain activates the methylesterase activity.

Its subcellular location is the cytoplasm. It catalyses the reaction [protein]-L-glutamate 5-O-methyl ester + H2O = L-glutamyl-[protein] + methanol + H(+). It carries out the reaction L-glutaminyl-[protein] + H2O = L-glutamyl-[protein] + NH4(+). In terms of biological role, involved in chemotaxis. Part of a chemotaxis signal transduction system that modulates chemotaxis in response to various stimuli. Catalyzes the demethylation of specific methylglutamate residues introduced into the chemoreceptors (methyl-accepting chemotaxis proteins or MCP) by CheR. Also mediates the irreversible deamidation of specific glutamine residues to glutamic acid. This Salmonella choleraesuis (strain SC-B67) protein is Protein-glutamate methylesterase/protein-glutamine glutaminase.